The chain runs to 443 residues: Glutamate-1-semialdehyde 2,1-aminomutase (443 aa).

N6-(pyridoxal phosphate)lysine is present on K281.

This sequence belongs to the class-III pyridoxal-phosphate-dependent aminotransferase family. HemL subfamily. Homodimer. The cofactor is pyridoxal 5'-phosphate.

The protein localises to the cytoplasm. It catalyses the reaction (S)-4-amino-5-oxopentanoate = 5-aminolevulinate. Its pathway is porphyrin-containing compound metabolism; protoporphyrin-IX biosynthesis; 5-aminolevulinate from L-glutamyl-tRNA(Glu): step 2/2. This chain is Glutamate-1-semialdehyde 2,1-aminomutase, found in Leptospira interrogans serogroup Icterohaemorrhagiae serovar Lai (strain 56601).